A 200-amino-acid polypeptide reads, in one-letter code: 3-isopropylmalate dehydratase small subunit (200 aa).

It belongs to the LeuD family. LeuD type 1 subfamily. In terms of assembly, heterodimer of LeuC and LeuD.

The catalysed reaction is (2R,3S)-3-isopropylmalate = (2S)-2-isopropylmalate. Its pathway is amino-acid biosynthesis; L-leucine biosynthesis; L-leucine from 3-methyl-2-oxobutanoate: step 2/4. In terms of biological role, catalyzes the isomerization between 2-isopropylmalate and 3-isopropylmalate, via the formation of 2-isopropylmaleate. The polypeptide is 3-isopropylmalate dehydratase small subunit (Pseudarthrobacter chlorophenolicus (strain ATCC 700700 / DSM 12829 / CIP 107037 / JCM 12360 / KCTC 9906 / NCIMB 13794 / A6) (Arthrobacter chlorophenolicus)).